Reading from the N-terminus, the 238-residue chain is Sugar fermentation stimulation protein homolog (238 aa).

It belongs to the SfsA family.

The sequence is that of Sugar fermentation stimulation protein homolog from Vibrio parahaemolyticus serotype O3:K6 (strain RIMD 2210633).